The sequence spans 279 residues: Nitrate import permease protein NrtB (279 aa).

Residues isoleucine 86–alanine 270 form the ABC transmembrane type-1 domain. Transmembrane regions (helical) follow at residues leucine 98 to phenylalanine 118, isoleucine 124 to phenylalanine 144, alanine 151 to valine 171, valine 196 to serine 216, tryptophan 217 to tryptophan 237, and isoleucine 249 to isoleucine 269.

This sequence belongs to the binding-protein-dependent transport system permease family. CysTW subfamily. In terms of assembly, the complex is composed of two ATP-binding proteins (NrtC and NrtD), two transmembrane proteins (NrtB) and a solute-binding protein (NrtA).

It is found in the cell inner membrane. Its function is as follows. Part of the ABC transporter complex NrtABCD involved in nitrate uptake. The complex is probably also involved in nitrite transport. Probably responsible for the translocation of the substrate across the membrane. The sequence is that of Nitrate import permease protein NrtB from Leptolyngbya laminosa (Phormidium laminosum).